The chain runs to 928 residues: Mitogen-activated protein kinase kinase kinase dlk-1 (928 aa).

The segment at Met-1 to Lys-72 is disordered. Over residues Leu-42–Ile-52 the composition is skewed to polar residues. The segment covering Gln-53–Pro-69 has biased composition (basic and acidic residues). The 243-residue stretch at Ile-135–Ile-377 folds into the Protein kinase domain. ATP-binding positions include Leu-141–Val-149 and Lys-162. Asp-246 (proton acceptor) is an active-site residue. Positions Leu-459 to Leu-480 are leucine-zipper. Disordered stretches follow at residues Arg-483 to Arg-575, Arg-644 to Asn-696, and Glu-802 to Ser-845. A compositionally biased stretch (acidic residues) spans Gly-509 to Val-519. Positions Ser-530–Thr-557 are enriched in low complexity. The tract at residues Ser-605–Asp-814 is important for interaction between isoform a and isoform c. Over residues Ser-647–Val-656 the composition is skewed to polar residues. Residues Ser-677–Arg-695 are compositionally biased toward low complexity. Residues Ala-823–Gly-833 are compositionally biased toward acidic residues. Phosphoserine occurs at positions 874 and 878. Residues Ser-874–Asp-879 carry the SDGLSD hexapeptide motif.

The protein belongs to the protein kinase superfamily. STE Ser/Thr protein kinase family. MAP kinase kinase kinase subfamily. In terms of assembly, homooligomer (via leucine zipper domain and hexapeptide motif). Isoform a (via leucine zipper domain) forms a heterooligomer with isoform c (via leucine zipper domain). Isoform c does not self-associate. Mg(2+) is required as a cofactor. Ubiquitinated by rpm-1. Negatively regulated by ubiquitination by fsn-1 bound rpm-1, followed by degradation. In terms of processing, phosphorylation at Ser-874 and/or at Ser-878 abolishes interaction with isoform c and promotes binding to isoform a kinase domain (likely in trans) resulting in isoform a self-association and activation. Expressed in nerve ring, nerve cord, neurons, and pharynx.

The protein resides in the synapse. Its subcellular location is the cytoplasm. It localises to the cell projection. It is found in the axon. The protein localises to the dendrite. The protein resides in the cilium. It catalyses the reaction L-seryl-[protein] + ATP = O-phospho-L-seryl-[protein] + ADP + H(+). The catalysed reaction is L-threonyl-[protein] + ATP = O-phospho-L-threonyl-[protein] + ADP + H(+). Inactive when associated with isoform c. Dissociation from isoform c, which is dependent on the phosphorylation of the C-terminal hexapeptide, results in self-association and activation. Transient increase in Ca(2+) levels caused by axonal injury or synaptic activity triggers the dissociation of isoform a from isoform c; the dissociation may be influenced by the phosphorylation status of the C-terminal hexapeptide. Component of a MAP kinase pathway that functions presynaptically to regulate synaptic architecture and presynaptic differentiation. Phosphorylates and activates mkk-4. Has a role in axonal regrowth following injury and synaptogenesis. Plays a role in modulating polymerization of neuronal microtubules. Also promotes tubulin post-translational modifications that protect microtubules. Plays a role in cilium length regulation, possibly by reducing rab-5 mediated endocytosis, and may also have a role in intraflagellar transport in cilia. Plays a role in the formation of muscle connections, also called muscle arm extensions, between the body wall and the motor axons in the dorsal and ventral cord. Its function is as follows. Has a role in synapse and axon development, and in axonal regrowth following injury. In terms of biological role, by forming heterooligomers with isoform a, acts as an inhibitor of isoform a activation. Its inhibitory function is independent of its catalytic activity. The protein is Mitogen-activated protein kinase kinase kinase dlk-1 (dlk-1) of Caenorhabditis elegans.